Here is a 447-residue protein sequence, read N- to C-terminus: Probable glycine dehydrogenase (decarboxylating) subunit 1 (447 aa).

It belongs to the GcvP family. N-terminal subunit subfamily. As to quaternary structure, the glycine cleavage system is composed of four proteins: P, T, L and H. In this organism, the P 'protein' is a heterodimer of two subunits.

It catalyses the reaction N(6)-[(R)-lipoyl]-L-lysyl-[glycine-cleavage complex H protein] + glycine + H(+) = N(6)-[(R)-S(8)-aminomethyldihydrolipoyl]-L-lysyl-[glycine-cleavage complex H protein] + CO2. Its function is as follows. The glycine cleavage system catalyzes the degradation of glycine. The P protein binds the alpha-amino group of glycine through its pyridoxal phosphate cofactor; CO(2) is released and the remaining methylamine moiety is then transferred to the lipoamide cofactor of the H protein. In Bacillus cereus (strain AH187), this protein is Probable glycine dehydrogenase (decarboxylating) subunit 1.